The primary structure comprises 248 residues: 5'-nucleotidase SurE (248 aa).

Asp8, Asp9, Ser39, and Asn91 together coordinate a divalent metal cation.

The protein belongs to the SurE nucleotidase family. The cofactor is a divalent metal cation.

The protein resides in the cytoplasm. It catalyses the reaction a ribonucleoside 5'-phosphate + H2O = a ribonucleoside + phosphate. Nucleotidase that shows phosphatase activity on nucleoside 5'-monophosphates. The polypeptide is 5'-nucleotidase SurE (Neisseria meningitidis serogroup C (strain 053442)).